A 438-amino-acid chain; its full sequence is MPISKIHARSVYDSRGNPTVEVDVVTETGLHRAIVPSGASTGLHEVVELRDGDKTKWGGKGVLNAVKNVNDVIGPALIKENIDVKDQAKVDEFLNKLDGTPNKGKLGANAILGVSLAVAKAAAAEKGVPLYAHISDLAGTKKPFVLPVPFQNVLNGGSHAGGRLAFQEFMIVPDTAPTFSEGLRQGAEVYQELKALAKKKYGQSAGNVGDEGGVAPDIQTAEEALDLITEAIEQAGYTGQIKIAMDVASSEFYKEDAKKYDLDFKNPESDPTKWLTYEQLADLYKSLAAKYPIVSIEDPFAEDDWEAWSYFYKTSDFQIVGDDLTVTNPLRIKKAIELKSCNALLLKVNQIGTLTESIQAAKDSYADGWGVMVSHRSGETEDVTIADIAVGLRAGQIKTGAPARSERLAKLNQILRIEEELGANAVYAGEKFRTAVNL.

Substrate-binding residues include His159 and Glu168. The active-site Proton donor is the Glu211. Residues Asp246, Glu297, and Asp322 each contribute to the Mg(2+) site. Substrate contacts are provided by Glu297 and Asp322. Lys347 acts as the Proton acceptor in catalysis. Residues 374-377 (SHRS) and Lys398 contribute to the substrate site.

It belongs to the enolase family. In terms of assembly, homodimer. Mg(2+) is required as a cofactor.

The protein localises to the cytoplasm. It carries out the reaction (2R)-2-phosphoglycerate = phosphoenolpyruvate + H2O. Its pathway is carbohydrate degradation; glycolysis; pyruvate from D-glyceraldehyde 3-phosphate: step 4/5. This is Enolase (enoA) from Penicillium chrysogenum (Penicillium notatum).